We begin with the raw amino-acid sequence, 470 residues long: Nuclear receptor ROR-beta (470 aa).

The segment at residues 18 to 93 is a DNA-binding region (nuclear receptor); it reads VIPCKICGDK…LGMSRDAVKF (76 aa). 2 consecutive NR C4-type zinc fingers follow at residues 21 to 41 and 57 to 81; these read CKIC…CEGC and CPRQ…LQKC. A compositionally biased stretch (basic and acidic residues) spans 104–117; that stretch reads LYAEVQKHQQRLQE. The disordered stretch occupies residues 104–127; it reads LYAEVQKHQQRLQEQRQQQSGEAE. One can recognise an NR LBD domain in the interval 222–460; the sequence is EIDRIAQNII…TLFPPLYKEL (239 aa). The short motif at 456-461 is the AF-2 element; it reads LYKELF.

This sequence belongs to the nuclear hormone receptor family. NR1 subfamily. Monomer. Interacts with CRX. As to expression, isoform 2 expressed with circadian rhythm in eye and pineal gland. Isoform 1 expressed in retina cortex, thalamus, and hypothalamus.

The protein resides in the nucleus. Its subcellular location is the nucleoplasm. Nuclear receptor that binds DNA as a monomer to ROR response elements (RORE) containing a single core motif half-site 5'-AGGTCA-3' preceded by a short A-T-rich sequence. Considered to have intrinsic transcriptional activity, have some natural ligands such as all-trans retinoic acid (ATRA) and other retinoids which act as inverse agonists repressing the transcriptional activity. Required for normal postnatal development of rod and cone photoreceptor cells. Modulates rod photoreceptors differentiation at least by inducing the transcription factor NRL-mediated pathway. In cone photoreceptor cells, regulates transcription of OPN1SW. Involved in the regulation of the period length and stability of the circadian rhythm. May control cytoarchitectural patterning of neocortical neurons during development. May act in a dose-dependent manner to regulate barrel formation upon innervation of layer IV neurons by thalamocortical axons. May play a role in the suppression of osteoblastic differentiation through the inhibition of RUNX2 transcriptional activity. Functionally, critical for hindlimb motor control and for the differentiation of amacrine and horizontal cells in the retina. Regulates the expression of PTF1A synergistically with FOXN4. The protein is Nuclear receptor ROR-beta (Rorb) of Rattus norvegicus (Rat).